The following is a 401-amino-acid chain: UPF0242 protein CCA_01002 (401 aa).

This sequence belongs to the UPF0242 family.

In Chlamydia caviae (strain ATCC VR-813 / DSM 19441 / 03DC25 / GPIC) (Chlamydophila caviae), this protein is UPF0242 protein CCA_01002.